Here is a 659-residue protein sequence, read N- to C-terminus: MRPRPLLLLFLLFLPMLPAPPTGQPSGRRRGRRSGGTGGGFWGDRVDSQPFAIPYIHPTNPFAPDVAAASGSGPRLRQPARPLGSTWRDQAQRPSAASRRRPATAGAAALTAVAPAHDTSPVPDVDSRGAILRRQYNLSTSPLTSSVASGTNLVLYAAPLNPPLPLQDGTNTHIMATEASNYAQYRVARATIRYRPLVPNAVGGYAISISFWPQTTTTPTSVDMNSITSTDVRILVQPGIASELVIPSERLHYRNQGWRSVETSGVAEEEATSGLVMLCIHGSPVNSYTNTPYTGALGLLDFALELEFRNLTTCNTNTRVSRYSSTARHSARGADGTAELTTTAATRFMKDLHFTGLNGVGEVGRGIALTLLNLADTLLGGLPTELISSAGGQLFYSRPVVSANGEPTVKLYTSVENAQQDKGVAIPHDIDLGDSRVVIQDYDNQHEQDRPTPSPAPSRPFSVLRANDVLWLSLTAAEYDQSTYGSSTGPVYISDSVTLVNVATGAQAVARSLDWSKVTLDGRPLPTVEQYSKTFFVLPLRGKLSFWEAGTTKAGYPYNYNTTASDQILIENAAGHRVAISTYTTRLGAGPVAISAAAVLAPRSALALLEDTFDYPGRAHTFDDFCPECRALGLQGCAFQSTVAELQRLKVKVGKTREL.

The signal sequence occupies residues 1 to 23 (MRPRPLLLLFLLFLPMLPAPPTG). Disordered stretches follow at residues 19–43 (APPT…GFWG) and 64–107 (PDVA…TAGA). The short motif at 28–33 (RRRGRR) is the Nuclear localization signal element. The span at 92 to 107 (QRPSAASRRRPATAGA) shows a compositional bias: low complexity. N-linked (GlcNAc...) asparagine; by host glycosylation is found at Asn137 and Asn310. Residues 367–393 (IALTLLNLADTLLGGLPTELISSAGGQ) form a particle formation region. Residue Asn561 is glycosylated (N-linked (GlcNAc...) asparagine; by host). Residues 584–609 (TTRLGAGPVAISAAAVLAPRSALALL) form an oligomerization region.

Belongs to the hepevirus capsid protein family. In terms of assembly, homodimer. As to quaternary structure, self-assembles to form the capsid. The capsid is dominated by dimers that define the 30 morphological units. Interacts with phosphorylated protein ORF3. Interacts with host TMEM134. Interacts with host ASGR1 and ASGR2; these interactions facilitate infection of host hepatocytes. In terms of processing, cleaved by host protease in the N-terminus. Post-translationally, N-glycosylated. Not N-glycosylated. The C-terminus of the capsid protein ORF2 is truncated in non-enveloped virions shedded in feces, probably due to host proteases.

The protein localises to the secreted. Its subcellular location is the virion. It is found in the host cytoplasm. It localises to the host endoplasmic reticulum. The protein resides in the host Golgi apparatus. The protein localises to the host cell surface. Its subcellular location is the host nucleus. In terms of biological role, plays a role in the inhibition of host antibody-mediated neutralization without blocking viral cell entry. Its function is as follows. Forms an icosahedral capsid with a T=1 symmetry and a 34 nm diameter. The capsid is composed of 60 copies linked to each other. Binds to the 5' end of the genomic RNA to mediate genome encapsidation. Binds to heparin surface proteoglycans (HSPGs) to mediate viral entry. Additionally, the interactions with host ASGR1 and ASGR2 facilitate viral infection of hepatocytes. Inhibits IFN production by blocking host TBK1-induced IRF3 phosphorylation. The nuclear form probably modulates host gene expression. This is Pro-secreted protein ORF2 from Bandicota bengalensis (lesser bandicoot rat).